Reading from the N-terminus, the 442-residue chain is MRHRSCFSLFAGLALVFCLAVGTAAAGPVQVDIYGPGQGSLNLAMAAPLGPTPGTPVSGMGVKLNGFINENLSFLPFLRLVDQRAILGGTVMQGYKSPDIDLKRFQLAGADLVVTAGWPQGDASGSFVELRVYEALSGKLVFGKAYSHVEDGLLPNVADRFCSDLMKALTGRGEFFKSTLAFVKHDGKNKRDVWLVKPVGRDLRKITNLPGEALSPSWSPDGRFVVFSHFDDRSHALGVWDRLTRQVQRIRFPGNTVIGPCFLPDNKVAVSLSSGRNPDIFLLNHLFKKERELEANPSINVSPSFDATGTKMAFTSSRMGGPQVFMKDMTTGQVTRISKTGSYNTEPSISPDGTLVAFTKMTDTGHRIFVYDMVTQSERQVSFGPGRDEQPSFAPDSYFLAFTSNRNGAQQIFLVTRHGGDPKRVPTGPGDASFARWGMIPE.

Residues 1–26 form the signal peptide; the sequence is MRHRSCFSLFAGLALVFCLAVGTAAA.

The protein belongs to the TolB family. In terms of assembly, the Tol-Pal system is composed of five core proteins: the inner membrane proteins TolA, TolQ and TolR, the periplasmic protein TolB and the outer membrane protein Pal. They form a network linking the inner and outer membranes and the peptidoglycan layer.

The protein resides in the periplasm. In terms of biological role, part of the Tol-Pal system, which plays a role in outer membrane invagination during cell division and is important for maintaining outer membrane integrity. The protein is Tol-Pal system protein TolB of Nitratidesulfovibrio vulgaris (strain ATCC 29579 / DSM 644 / CCUG 34227 / NCIMB 8303 / VKM B-1760 / Hildenborough) (Desulfovibrio vulgaris).